A 240-amino-acid chain; its full sequence is Methylthioribulose-1-phosphate dehydratase (240 aa).

Cys-100 provides a ligand contact to substrate. 2 residues coordinate Zn(2+): His-117 and His-119. Glu-146 acts as the Proton donor/acceptor in catalysis. His-202 serves as a coordination point for Zn(2+).

It belongs to the aldolase class II family. MtnB subfamily. Zn(2+) serves as cofactor.

It is found in the cytoplasm. The enzyme catalyses 5-(methylsulfanyl)-D-ribulose 1-phosphate = 5-methylsulfanyl-2,3-dioxopentyl phosphate + H2O. It functions in the pathway amino-acid biosynthesis; L-methionine biosynthesis via salvage pathway; L-methionine from S-methyl-5-thio-alpha-D-ribose 1-phosphate: step 2/6. Functionally, catalyzes the dehydration of methylthioribulose-1-phosphate (MTRu-1-P) into 2,3-diketo-5-methylthiopentyl-1-phosphate (DK-MTP-1-P). The sequence is that of Methylthioribulose-1-phosphate dehydratase from Emericella nidulans (strain FGSC A4 / ATCC 38163 / CBS 112.46 / NRRL 194 / M139) (Aspergillus nidulans).